The primary structure comprises 210 residues: Flagellar transcriptional regulator FlhC (210 aa).

Residues C144, C147, C164, and C167 each coordinate Zn(2+).

Belongs to the FlhC family. Heterohexamer composed of two FlhC and four FlhD subunits. Each FlhC binds a FlhD dimer, forming a heterotrimer, and a hexamer assembles by dimerization of two heterotrimers. Zn(2+) serves as cofactor.

It is found in the cytoplasm. Functions in complex with FlhD as a master transcriptional regulator that regulates transcription of several flagellar and non-flagellar operons by binding to their promoter region. Activates expression of class 2 flagellar genes, including fliA, which is a flagellum-specific sigma factor that turns on the class 3 genes. Also regulates genes whose products function in a variety of physiological pathways. This is Flagellar transcriptional regulator FlhC from Cupriavidus pinatubonensis (strain JMP 134 / LMG 1197) (Cupriavidus necator (strain JMP 134)).